The following is a 268-amino-acid chain: 4-hydroxy-tetrahydrodipicolinate reductase (268 aa).

NAD(+)-binding positions include 10–15, Asp-36, 99–101, and 123–126; these read GASGRM, GTT, and APNM. His-156 acts as the Proton donor/acceptor in catalysis. His-157 is a (S)-2,3,4,5-tetrahydrodipicolinate binding site. Lys-160 functions as the Proton donor in the catalytic mechanism. Residue 166–167 participates in (S)-2,3,4,5-tetrahydrodipicolinate binding; it reads GT.

This sequence belongs to the DapB family.

It is found in the cytoplasm. The enzyme catalyses (S)-2,3,4,5-tetrahydrodipicolinate + NAD(+) + H2O = (2S,4S)-4-hydroxy-2,3,4,5-tetrahydrodipicolinate + NADH + H(+). It carries out the reaction (S)-2,3,4,5-tetrahydrodipicolinate + NADP(+) + H2O = (2S,4S)-4-hydroxy-2,3,4,5-tetrahydrodipicolinate + NADPH + H(+). Its pathway is amino-acid biosynthesis; L-lysine biosynthesis via DAP pathway; (S)-tetrahydrodipicolinate from L-aspartate: step 4/4. Catalyzes the conversion of 4-hydroxy-tetrahydrodipicolinate (HTPA) to tetrahydrodipicolinate. This chain is 4-hydroxy-tetrahydrodipicolinate reductase, found in Janthinobacterium sp. (strain Marseille) (Minibacterium massiliensis).